Here is a 500-residue protein sequence, read N- to C-terminus: NAD(P)H-quinone oxidoreductase chain 4, chloroplastic (500 aa).

14 helical membrane passes run 4 to 24 (FPWLTIIVVFPISAGSLMLFL), 35 to 55 (YTICICILELLITTYAFCYNF), 87 to 107 (IGTILLTGFITTLATLAAFPV), 113 to 130 (LFHFLMLAMYSGQIGSFS), 134 to 154 (LLLFFIMWELELIPVYLLLSM), 167 to 187 (FILYTAGSSIFLLIGVLGISL), 211 to 231 (ILFYIGFVIALTVKSPIIPLH), 242 to 262 (HYSTCMLLAGILLKMGAYGLV), 272 to 292 (AHSLFSPWLMAVGTIQIIYAA), 305 to 325 (IAYSSVSHMGFIIIGIGSITD), 330 to 350 (GAILQIISHGFIGAALFFLAG), 386 to 406 (LALPGMSGFVAELIVFFGIIT), 416 to 436 (ILIIFVMAIGIILTPIYLLSM), and 462 to 482 (LFLSISILLPIIGIGIYPDFV).

The protein belongs to the complex I subunit 4 family.

Its subcellular location is the plastid. It localises to the chloroplast thylakoid membrane. It carries out the reaction a plastoquinone + NADH + (n+1) H(+)(in) = a plastoquinol + NAD(+) + n H(+)(out). The catalysed reaction is a plastoquinone + NADPH + (n+1) H(+)(in) = a plastoquinol + NADP(+) + n H(+)(out). This Draba nemorosa (Woodland whitlowgrass) protein is NAD(P)H-quinone oxidoreductase chain 4, chloroplastic.